The following is a 360-amino-acid chain: Variable large protein 18 (360 aa).

The N-terminal stretch at 1 to 26 is a signal peptide; sequence MRKRISAIINKLNISIMMMIVVLMIG. C27 carries the N-palmitoyl cysteine lipid modification. Residue C27 is the site of S-diacylglycerol cysteine attachment.

The protein belongs to the variable large protein (Vlp) family. Alpha subfamily.

The protein resides in the cell outer membrane. Its function is as follows. The Vlp and Vsp proteins are antigenically distinct proteins, only one vlp or vsp gene is transcriptionally active at any one time. Switching between these genes is a mechanism of host immune response evasion. The polypeptide is Variable large protein 18 (Borrelia hermsii).